Consider the following 510-residue polypeptide: Bifunctional purine biosynthesis protein PurH (510 aa).

The 145-residue stretch at 1–145 (MTKRALLSVS…KNFAAVLPIV (145 aa)) folds into the MGS-like domain.

Belongs to the PurH family.

It carries out the reaction (6R)-10-formyltetrahydrofolate + 5-amino-1-(5-phospho-beta-D-ribosyl)imidazole-4-carboxamide = 5-formamido-1-(5-phospho-D-ribosyl)imidazole-4-carboxamide + (6S)-5,6,7,8-tetrahydrofolate. The catalysed reaction is IMP + H2O = 5-formamido-1-(5-phospho-D-ribosyl)imidazole-4-carboxamide. Its pathway is purine metabolism; IMP biosynthesis via de novo pathway; 5-formamido-1-(5-phospho-D-ribosyl)imidazole-4-carboxamide from 5-amino-1-(5-phospho-D-ribosyl)imidazole-4-carboxamide (10-formyl THF route): step 1/1. The protein operates within purine metabolism; IMP biosynthesis via de novo pathway; IMP from 5-formamido-1-(5-phospho-D-ribosyl)imidazole-4-carboxamide: step 1/1. In Lactiplantibacillus plantarum (strain ATCC BAA-793 / NCIMB 8826 / WCFS1) (Lactobacillus plantarum), this protein is Bifunctional purine biosynthesis protein PurH.